An 830-amino-acid chain; its full sequence is Envelope glycoprotein B (830 aa).

A signal peptide spans 1–19 (MSKMRVLFLAVFLMNSVLM). Residues 20–688 (IYCDSDDYIR…GGVVSFLKNP (669 aa)) are Virion surface-facing. 4 disulfide bridges follow: cysteine 41-cysteine 482, cysteine 58-cysteine 438, cysteine 131-cysteine 197, and cysteine 290-cysteine 337. The segment at 98–104 (SYRDVGV) is involved in fusion and/or binding to host membrane. A glycan (N-linked (GlcNAc...) asparagine; by host) is linked at asparagine 155. The interval 184 to 191 (GPLWLYST) is involved in fusion and/or binding to host membrane. N-linked (GlcNAc...) asparagine; by host glycans are attached at residues asparagine 247, asparagine 286, asparagine 329, asparagine 361, and asparagine 486. Residues cysteine 510 and cysteine 548 are joined by a disulfide bond. Hydrophobic membrane proximal region stretches follow at residues 634–686 (IEAK…SFLK) and 644–685 (SYVN…VSFL). Residues 689–709 (FGGGLMLILAIVVVVIIIVVF) traverse the membrane as a helical segment. Topologically, residues 710–830 (VRQKHVLSKP…GYKSVNVEEA (121 aa)) are intravirion. Positions 822-825 (YKSV) match the Internalization motif motif.

The protein belongs to the herpesviridae glycoprotein B family. In terms of assembly, homotrimer; disulfide-linked. Binds to heparan sulfate proteoglycans. Interacts with gH/gL heterodimer. In terms of processing, a proteolytic cleavage by host furin generates two subunits that remain linked by disulfide bonds.

Its subcellular location is the virion membrane. The protein resides in the host cell membrane. It localises to the host endosome membrane. It is found in the host Golgi apparatus membrane. In terms of biological role, envelope glycoprotein that forms spikes at the surface of virion envelope. Essential for the initial attachment to heparan sulfate moieties of the host cell surface proteoglycans. Involved in fusion of viral and cellular membranes leading to virus entry into the host cell. Following initial binding to its host receptors, membrane fusion is mediated by the fusion machinery composed at least of gB and the heterodimer gH/gL. May be involved in the fusion between the virion envelope and the outer nuclear membrane during virion egress. The protein is Envelope glycoprotein B of Homo sapiens (Human).